The following is a 128-amino-acid chain: Aspartate 1-decarboxylase (128 aa).

Ser25 (schiff-base intermediate with substrate; via pyruvic acid) is an active-site residue. Ser25 bears the Pyruvic acid (Ser) mark. Thr57 is a binding site for substrate. Residue Tyr58 is the Proton donor of the active site. Gly73 to Ala75 serves as a coordination point for substrate.

Belongs to the PanD family. In terms of assembly, heterooctamer of four alpha and four beta subunits. It depends on pyruvate as a cofactor. Post-translationally, is synthesized initially as an inactive proenzyme, which is activated by self-cleavage at a specific serine bond to produce a beta-subunit with a hydroxyl group at its C-terminus and an alpha-subunit with a pyruvoyl group at its N-terminus.

The protein resides in the cytoplasm. The enzyme catalyses L-aspartate + H(+) = beta-alanine + CO2. The protein operates within cofactor biosynthesis; (R)-pantothenate biosynthesis; beta-alanine from L-aspartate: step 1/1. In terms of biological role, catalyzes the pyruvoyl-dependent decarboxylation of aspartate to produce beta-alanine. This Moorella thermoacetica (strain ATCC 39073 / JCM 9320) protein is Aspartate 1-decarboxylase.